A 279-amino-acid polypeptide reads, in one-letter code: Thymidylate synthase 1 (279 aa).

141–142 (RR) provides a ligand contact to dUMP. The Nucleophile role is filled by Cys-161. DUMP-binding positions include 181 to 184 (RSND), Asn-192, and 222 to 224 (HVY). Asp-184 is a (6R)-5,10-methylene-5,6,7,8-tetrahydrofolate binding site. A (6R)-5,10-methylene-5,6,7,8-tetrahydrofolate-binding site is contributed by Ala-278.

This sequence belongs to the thymidylate synthase family. Bacterial-type ThyA subfamily. Homodimer.

Its subcellular location is the cytoplasm. It catalyses the reaction dUMP + (6R)-5,10-methylene-5,6,7,8-tetrahydrofolate = 7,8-dihydrofolate + dTMP. It functions in the pathway pyrimidine metabolism; dTTP biosynthesis. In terms of biological role, catalyzes the reductive methylation of 2'-deoxyuridine-5'-monophosphate (dUMP) to 2'-deoxythymidine-5'-monophosphate (dTMP) while utilizing 5,10-methylenetetrahydrofolate (mTHF) as the methyl donor and reductant in the reaction, yielding dihydrofolate (DHF) as a by-product. This enzymatic reaction provides an intracellular de novo source of dTMP, an essential precursor for DNA biosynthesis. This Bacillus spizizenii (strain ATCC 23059 / NRRL B-14472 / W23) (Bacillus subtilis subsp. spizizenii) protein is Thymidylate synthase 1.